We begin with the raw amino-acid sequence, 447 residues long: N-succinylarginine dihydrolase (447 aa).

Residues 19–28 (AGLSFGNEAS), Asn-110, and 137–138 (HR) each bind substrate. Glu-174 is an active-site residue. Arg-212 contributes to the substrate binding site. Residue His-248 is part of the active site. Substrate contacts are provided by Asp-250 and Asn-359. The Nucleophile role is filled by Cys-365.

The protein belongs to the succinylarginine dihydrolase family. In terms of assembly, homodimer.

It catalyses the reaction N(2)-succinyl-L-arginine + 2 H2O + 2 H(+) = N(2)-succinyl-L-ornithine + 2 NH4(+) + CO2. Its pathway is amino-acid degradation; L-arginine degradation via AST pathway; L-glutamate and succinate from L-arginine: step 2/5. Catalyzes the hydrolysis of N(2)-succinylarginine into N(2)-succinylornithine, ammonia and CO(2). The chain is N-succinylarginine dihydrolase from Escherichia coli O81 (strain ED1a).